Reading from the N-terminus, the 262-residue chain is Serine/arginine-rich SC35-like splicing factor SCL30 (262 aa).

Positions 1-14 (MRRYSPPYYSPPRR) are enriched in low complexity. Disordered stretches follow at residues 1–48 (MRRY…SHGS) and 123–262 (ASES…VSPR). Residues serine 5, serine 10, and serine 22 each carry the phosphoserine modification. A compositionally biased stretch (gly residues) spans 31–42 (GYGGGGGGGGRR). Positions 47-125 (GSLLVRNIPL…REITVVVASE (79 aa)) constitute an RRM domain. A compositionally biased stretch (basic and acidic residues) spans 125–152 (ESRKRPEEMRVKTRTRSREPSGSRDRSH). A compositionally biased stretch (basic residues) spans 153 to 167 (GRSRSRSISRSRSPR). Residues serine 182, serine 204, and serine 206 each carry the phosphoserine modification. A Phosphotyrosine modification is found at tyrosine 209. A compositionally biased stretch (basic and acidic residues) spans 217–239 (PDRDRNGDNEIREKPGYEAEDRR). Over residues 243–262 (RAVSRSPSGSRSRSVEVSPR) the composition is skewed to low complexity. A phosphoserine mark is found at serine 254, serine 256, and serine 260.

It belongs to the splicing factor SR family. SCL subfamily. Component of the spliceosome. Interacts with RS2Z33, CYP59, CYP63 and CYP95. Post-translationally, phosphorylated.

The protein localises to the nucleus speckle. Functionally, involved in intron recognition and spliceosome assembly. Probably active at the 5' splice sites. The protein is Serine/arginine-rich SC35-like splicing factor SCL30 (SCL30) of Arabidopsis thaliana (Mouse-ear cress).